A 161-amino-acid chain; its full sequence is Regulator of ribonuclease activity A (161 aa).

This sequence belongs to the RraA family. In terms of assembly, homotrimer. Binds to both RNA-binding sites in the C-terminal region of Rne and to RhlB.

Its subcellular location is the cytoplasm. Globally modulates RNA abundance by binding to RNase E (Rne) and regulating its endonucleolytic activity. Can modulate Rne action in a substrate-dependent manner by altering the composition of the degradosome. Modulates RNA-binding and helicase activities of the degradosome. This Alteromonas mediterranea (strain DSM 17117 / CIP 110805 / LMG 28347 / Deep ecotype) protein is Regulator of ribonuclease activity A.